We begin with the raw amino-acid sequence, 58 residues long: ATP synthase subunit a (58 aa).

2 helical membrane passes run 11 to 31 and 35 to 55; these read EIFY…LTGL and VAIL…NDAI.

It belongs to the ATPase A chain family. As to quaternary structure, F-type ATPases have 2 components, CF(1) - the catalytic core - and CF(0) - the membrane proton channel. CF(1) has five subunits: alpha(3), beta(3), gamma(1), delta(1), epsilon(1). CF(0) has three main subunits: a, b and c.

The protein localises to the mitochondrion inner membrane. Mitochondrial membrane ATP synthase (F(1)F(0) ATP synthase or Complex V) produces ATP from ADP in the presence of a proton gradient across the membrane which is generated by electron transport complexes of the respiratory chain. F-type ATPases consist of two structural domains, F(1) - containing the extramembraneous catalytic core and F(0) - containing the membrane proton channel, linked together by a central stalk and a peripheral stalk. During catalysis, ATP synthesis in the catalytic domain of F(1) is coupled via a rotary mechanism of the central stalk subunits to proton translocation. Key component of the proton channel; it may play a direct role in the translocation of protons across the membrane. The chain is ATP synthase subunit a (ATP6) from Brassica tournefortii (Wild turnip).